Consider the following 336-residue polypeptide: Isopentenyl-diphosphate delta-isomerase (336 aa).

5–6 (RK) lines the substrate pocket. FMN-binding positions include 60–62 (AMT), S90, and N117. Q147 lines the substrate pocket. E148 provides a ligand contact to Mg(2+). Residues K179, S204, T209, 253-255 (GVR), and 274-275 (SR) contribute to the FMN site.

Belongs to the IPP isomerase type 2 family. In terms of assembly, homooctamer. Dimer of tetramers. It depends on FMN as a cofactor. Requires NADPH as cofactor. The cofactor is Mg(2+).

It is found in the cytoplasm. It carries out the reaction isopentenyl diphosphate = dimethylallyl diphosphate. Involved in the biosynthesis of isoprenoids. Catalyzes the 1,3-allylic rearrangement of the homoallylic substrate isopentenyl (IPP) to its allylic isomer, dimethylallyl diphosphate (DMAPP). The sequence is that of Isopentenyl-diphosphate delta-isomerase from Streptococcus pneumoniae serotype 4 (strain ATCC BAA-334 / TIGR4).